Here is a 669-residue protein sequence, read N- to C-terminus: Coagulation factor XIII B chain (669 aa).

The signal sequence occupies residues 1–21 (MMTLRHLPFILLLILSGELYA). 10 Sushi domains span residues 25 to 89 (QCDF…PRCY), 90 to 149 (KKCL…SCRK), 152 to 211 (ETCL…QCNK), 212 to 270 (LMCS…ICEG), 273 to 330 (NRCP…KCIE), 335 to 392 (VACE…ECVE), 395 to 453 (ENCK…VCLE), 454 to 517 (PCTI…PMCI), 523 to 581 (GMCA…SCLE), and 582 to 648 (PCTL…PKCT). Disulfide bonds link Cys26–Cys77, Cys60–Cys88, Cys92–Cys136, Cys119–Cys147, Cys154–Cys198, Cys181–Cys209, Cys214–Cys256, Cys242–Cys268, Cys275–Cys317, Cys303–Cys328, Cys337–Cys379, Cys365–Cys390, Cys397–Cys440, Cys426–Cys451, Cys455–Cys506, Cys487–Cys516, Cys525–Cys568, Cys554–Cys579, Cys583–Cys637, and Cys617–Cys647. N-linked (GlcNAc...) asparagine glycosylation is present at Asn163. N-linked (GlcNAc...) asparagine glycosylation occurs at Asn546.

Tetramer of two A chains (F13A1) and two B (F13B) chains. Predominantly expressed in liver and kidney.

The protein resides in the secreted. In terms of biological role, the B chain of factor XIII is not catalytically active, but is thought to stabilize the A subunits and regulate the rate of transglutaminase formation by thrombin. The polypeptide is Coagulation factor XIII B chain (F13b) (Mus musculus (Mouse)).